Consider the following 897-residue polypeptide: Macoilin (897 aa).

Helical transmembrane passes span 113–133 (ICYL…YVWI), 157–177 (QSWP…FLRI), 181–201 (PILI…PVWP), and 204–224 (LNAF…TVSM). Polar residues-rich tracts occupy residues 291–304 (IQAA…SSKK) and 329–338 (GNSGFNSTPP). A disordered region spans residues 291–375 (IQAASATPPT…DTSSSTIEDQ (85 aa)). Residues 351 to 361 (DMDDGDDSDDD) are compositionally biased toward acidic residues. A helical membrane pass occupies residues 379–399 (GGISIIRFIFSSAAWLFSFVF). The segment covering 403–413 (TPSENSLSNQQ) has biased composition (polar residues). Disordered stretches follow at residues 403–535 (TPSE…QEED) and 724–770 (NGSS…SPVP). Acidic residues predominate over residues 414–424 (IDDDEDYEDGD). Residues 432–451 (TDSMTSTTKGRANTMPSTTR) are compositionally biased toward polar residues. 2 stretches are compositionally biased toward low complexity: residues 452 to 467 (SQNN…QSNG) and 475 to 490 (SHQN…SNGH). A coiled-coil region spans residues 503 to 726 (DTNASNETDI…VQEFQIKNGS (224 aa)). The span at 510-535 (TDIRSMSRELESLRSEISSRRSQEED) shows a compositional bias: basic and acidic residues. The span at 734–761 (ETLMNGRSSTEANNENDTTASDQSSPHQ) shows a compositional bias: polar residues.

In terms of tissue distribution, strong expression in many neurons, very weak expression is also detected in others tissues.

It localises to the rough endoplasmic reticulum membrane. The protein localises to the nucleus membrane. In terms of biological role, plays a role in the regulation of neuronal activity. In AWA and AWC neurons, plays a role in regulating olfactory adaptation by controlling the forgetting sensory responses to odorants such as diacetyl and isoamyl alcohol. May play a role in regulating daf-7 expression in ASI neurons in response to bacterial small RNAs. In ASI neurons, promotes dauer formation in response to pheromones such as the ascarosides ascr#2 and ascr#3. The sequence is that of Macoilin from Caenorhabditis elegans.